A 207-amino-acid chain; its full sequence is Thymidylate kinase (207 aa).

The disordered stretch occupies residues 11 to 49 (EGIDGSGKSTQARRLAEHLRDTGRDPLLTREPGGSPGAE). 12 to 19 (GIDGSGKS) is an ATP binding site. Residues 24 to 38 (RLAEHLRDTGRDPLL) are compositionally biased toward basic and acidic residues.

This sequence belongs to the thymidylate kinase family.

It catalyses the reaction dTMP + ATP = dTDP + ADP. In terms of biological role, phosphorylation of dTMP to form dTDP in both de novo and salvage pathways of dTTP synthesis. This is Thymidylate kinase from Dinoroseobacter shibae (strain DSM 16493 / NCIMB 14021 / DFL 12).